The primary structure comprises 334 residues: MDRTLIQEILEVVEQAAIASAHLTGLGKKDEADAAAVEAMRKRMGQIQMQGRIVIGEGERDEAPMLYIGEEVGSGSGPGVDFAVDPCEGTNLCANNQRGSMAVLAASDRGGLFNAPDFYMKKLAAPPSAKGKVDIRKSATENINILSQCLGLAVSELTIVVMDRARHKGLISEIRATGARVQPISDGDVQAAIACGFAGTGTHCLMGIGAAPEGVISAAAMRALGGHFQGQLVYDPAIAQTSEWADYTKEGNIARLNEMGITDVDKIYEAEELASGKNVVFAGSGITDGLLFHGVKFEPDCTRTSSLVISTLDNTARFTNTVHIKDGAKSIALS.

Mn(2+) contacts are provided by Asp33, Glu57, Asp85, and Glu88. Substrate is bound by residues 88–90 (EGT), Tyr119, 164–166 (RAR), and 186–188 (DGD). Mn(2+) is bound at residue Glu213.

The protein belongs to the FBPase class 2 family. Homotetramer. The cofactor is Mn(2+).

It catalyses the reaction beta-D-fructose 1,6-bisphosphate + H2O = beta-D-fructose 6-phosphate + phosphate. The catalysed reaction is D-sedoheptulose 1,7-bisphosphate + H2O = D-sedoheptulose 7-phosphate + phosphate. It functions in the pathway carbohydrate biosynthesis; Calvin cycle. In terms of biological role, catalyzes the hydrolysis of fructose 1,6-bisphosphate (Fru 1,6-P2) and sedoheptulose 1,7-bisphosphate (Sed 1,7-P2) to fructose 6-phosphate and sedoheptulose 7-phosphate, respectively. The polypeptide is D-fructose 1,6-bisphosphatase class 2/sedoheptulose 1,7-bisphosphatase (Prochlorococcus marinus (strain MIT 9313)).